The sequence spans 163 residues: NADH-quinone oxidoreductase subunit I (163 aa).

4Fe-4S ferredoxin-type domains are found at residues 53-83 and 94-123; these read LRRY…IEAG and VRYD…EGPN. 8 residues coordinate [4Fe-4S] cluster: Cys-63, Cys-66, Cys-69, Cys-73, Cys-103, Cys-106, Cys-109, and Cys-113.

Belongs to the complex I 23 kDa subunit family. NDH-1 is composed of 14 different subunits. Subunits NuoA, H, J, K, L, M, N constitute the membrane sector of the complex. The cofactor is [4Fe-4S] cluster.

The protein localises to the cell inner membrane. The catalysed reaction is a quinone + NADH + 5 H(+)(in) = a quinol + NAD(+) + 4 H(+)(out). Its function is as follows. NDH-1 shuttles electrons from NADH, via FMN and iron-sulfur (Fe-S) centers, to quinones in the respiratory chain. The immediate electron acceptor for the enzyme in this species is believed to be ubiquinone. Couples the redox reaction to proton translocation (for every two electrons transferred, four hydrogen ions are translocated across the cytoplasmic membrane), and thus conserves the redox energy in a proton gradient. The chain is NADH-quinone oxidoreductase subunit I from Bartonella bacilliformis (strain ATCC 35685 / KC583 / Herrer 020/F12,63).